The primary structure comprises 464 residues: Gamma-aminobutyric acid receptor subunit alpha-5 (464 aa).

A signal peptide spans 1-25 (MDNGMLSRFIMTKTLLVFCISMTLS). The Extracellular portion of the chain corresponds to 26–260 (SHFGFSQMPT…FHLKRKIGYF (235 aa)). Asparagine 45 carries an N-linked (GlcNAc...) asparagine glycan. Arginine 101 is a 4-aminobutanoate binding site. Asparagine 145 carries an N-linked (GlcNAc...) asparagine glycan. Residue threonine 164 coordinates 4-aminobutanoate. A disulfide bridge links cysteine 173 with cysteine 187. 2 N-linked (GlcNAc...) asparagine glycosylation sites follow: asparagine 207 and asparagine 236. Helical transmembrane passes span 261-281 (VIQT…SFWL), 287-308 (PART…ISAR), and 319-340 (AMDW…EFAT). Topologically, residues 341-429 (VNYFTKRGWA…TYNSISKIDK (89 aa)) are cytoplasmic. A Glycyl lysine isopeptide (Lys-Gly) (interchain with G-Cter in ubiquitin) cross-link involves residue lysine 355. The tract at residues 382–414 (KLTHPPNIPKEQLPGGTGNAVGTASIRASEEKT) is disordered. The chain crosses the membrane as a helical span at residues 430 to 450 (MSRIVFPILFGTFNLVYWATY).

The protein belongs to the ligand-gated ion channel (TC 1.A.9) family. Gamma-aminobutyric acid receptor (TC 1.A.9.5) subfamily. GABRA5 sub-subfamily. As to quaternary structure, heteropentamer, formed by a combination of alpha (GABRA1-6), beta (GABRB1-3), gamma (GABRG1-3), delta (GABRD), epsilon (GABRE), rho (GABRR1-3), pi (GABRP) and theta (GABRQ) chains, each subunit exhibiting distinct physiological and pharmacological properties. As to expression, expressed in brain areas such as cerebral cortex, hippocampal formation and olfactory bulb granular layer.

It localises to the postsynaptic cell membrane. The protein resides in the cell membrane. The catalysed reaction is chloride(in) = chloride(out). Its activity is regulated as follows. Allosterically potentiated by alphaxalone. Allosterically inhibited by pregnenolone sulfate. Inhibited by zinc and lanthanum. Alpha subunit of the heteropentameric ligand-gated chloride channel gated by gamma-aminobutyric acid (GABA), a major inhibitory neurotransmitter in the brain. GABA-gated chloride channels, also named GABA(A) receptors (GABAAR), consist of five subunits arranged around a central pore and contain GABA active binding site(s) located at the alpha and beta subunit interface(s). When activated by GABA, GABAARs selectively allow the flow of chloride anions across the cell membrane down their electrochemical gradient. GABAARs containing alpha-5/GABRA5 subunits are mainly extrasynaptic and contribute to the tonic GABAergic inhibition in the hippocampus. Extrasynaptic alpha-5-containing GABAARs in CA1 pyramidal neurons play a role in learning and memory processes. The polypeptide is Gamma-aminobutyric acid receptor subunit alpha-5 (Rattus norvegicus (Rat)).